We begin with the raw amino-acid sequence, 155 residues long: Secreted RxLR effector protein RXLR-C301 (155 aa).

The first 24 residues, 1 to 24 (MRLYALSVSLLAAITLLACVIASA), serve as a signal peptide directing secretion. Residues 34-64 (RRLSQDVSETEITELSESKKPTAQDIDNEER) carry the RxLR-dEER motif.

It belongs to the RxLR effector family.

The protein localises to the secreted. The protein resides in the host cell membrane. Its function is as follows. Secreted effector that does not suppress pattern-triggered immunity (PTI) in plant host. This Plasmopara halstedii (Downy mildew of sunflower) protein is Secreted RxLR effector protein RXLR-C301.